Reading from the N-terminus, the 229-residue chain is Casparian strip membrane protein 1 (229 aa).

The Cytoplasmic segment spans residues 1-67 (MSTSEAGAAA…FRRADRGSRC (67 aa)). The chain crosses the membrane as a helical span at residues 68–88 (VALLDFVLRVAAFGPALAAAI). Over 89-115 (ATGTSDETLSVFTQFFQFHARFDDFPA) the chain is Extracellular. Residues 116-136 (LLFFMVANAIAAGYLVLSLPF) traverse the membrane as a helical segment. The Cytoplasmic portion of the chain corresponds to 137–157 (SAVIVLRPQAIGLRHLLLVCD). Residues 158 to 178 (MIIAALLTAAAAAAAAIVDLA) traverse the membrane as a helical segment. Topologically, residues 179–205 (HSGNLRANWVPICMQFHGFCQRTSGAV) are extracellular. A helical membrane pass occupies residues 206–226 (VGSFLAVLVLLFLVILAAFAI). At 227 to 229 (RKR) the chain is on the cytoplasmic side.

It belongs to the Casparian strip membrane proteins (CASP) family. As to quaternary structure, homodimer and heterodimers.

It localises to the cell membrane. Its function is as follows. Regulates membrane-cell wall junctions and localized cell wall deposition. Required for establishment of the Casparian strip membrane domain (CSD) and the subsequent formation of Casparian strips, a cell wall modification of the root endodermis that determines an apoplastic barrier between the intraorganismal apoplasm and the extraorganismal apoplasm and prevents lateral diffusion. In Sorghum bicolor (Sorghum), this protein is Casparian strip membrane protein 1.